The sequence spans 517 residues: Recombining binding protein suppressor of hairless-like protein (517 aa).

The span at 26-37 (EMQLQSEADRRS) shows a compositional bias: basic and acidic residues. Positions 26–48 (EMQLQSEADRRSLPGTWTRSSPE) are disordered. DNA-binding stretches follow at residues 78–88 (QKSYGNEKRFF), 193–198 (SKPSQK), and 220–225 (RLRSQT). One can recognise an IPT/TIG domain in the interval 387-512 (LISTLELSGG…HQEFTRTNFH (126 aa)).

The protein belongs to the Su(H) family. As to quaternary structure, interacts weakly with EBNA2. Does not interact with any Notch proteins.

It is found in the nucleus. Its function is as follows. Putative transcription factor, which cooperates with EBNA2 to activate transcription. This Homo sapiens (Human) protein is Recombining binding protein suppressor of hairless-like protein (RBPJL).